We begin with the raw amino-acid sequence, 368 residues long: UDP-N-acetylglucosamine--N-acetylmuramyl-(pentapeptide) pyrophosphoryl-undecaprenol N-acetylglucosamine transferase (368 aa).

UDP-N-acetyl-alpha-D-glucosamine-binding positions include 16 to 18 (TGG), Asn-130, Arg-171, Ser-197, and Gln-296.

This sequence belongs to the glycosyltransferase 28 family. MurG subfamily.

It is found in the cell inner membrane. It catalyses the reaction di-trans,octa-cis-undecaprenyl diphospho-N-acetyl-alpha-D-muramoyl-L-alanyl-D-glutamyl-meso-2,6-diaminopimeloyl-D-alanyl-D-alanine + UDP-N-acetyl-alpha-D-glucosamine = di-trans,octa-cis-undecaprenyl diphospho-[N-acetyl-alpha-D-glucosaminyl-(1-&gt;4)]-N-acetyl-alpha-D-muramoyl-L-alanyl-D-glutamyl-meso-2,6-diaminopimeloyl-D-alanyl-D-alanine + UDP + H(+). It participates in cell wall biogenesis; peptidoglycan biosynthesis. In terms of biological role, cell wall formation. Catalyzes the transfer of a GlcNAc subunit on undecaprenyl-pyrophosphoryl-MurNAc-pentapeptide (lipid intermediate I) to form undecaprenyl-pyrophosphoryl-MurNAc-(pentapeptide)GlcNAc (lipid intermediate II). The chain is UDP-N-acetylglucosamine--N-acetylmuramyl-(pentapeptide) pyrophosphoryl-undecaprenol N-acetylglucosamine transferase from Acidiphilium cryptum (strain JF-5).